The sequence spans 436 residues: UPF0597 protein YhaM (436 aa).

The protein belongs to the UPF0597 family.

This Salmonella dublin (strain CT_02021853) protein is UPF0597 protein YhaM.